Here is a 455-residue protein sequence, read N- to C-terminus: Fumarate hydratase class II (455 aa).

Substrate contacts are provided by residues 96-98 (SGT), 122-125 (HPND), 132-134 (SSN), and Thr180. His181 (proton donor/acceptor) is an active-site residue. The active site involves Ser311. Residues Ser312 and 317–319 (KVN) contribute to the substrate site.

This sequence belongs to the class-II fumarase/aspartase family. Fumarase subfamily. In terms of assembly, homotetramer.

Its subcellular location is the cytoplasm. The enzyme catalyses (S)-malate = fumarate + H2O. It participates in carbohydrate metabolism; tricarboxylic acid cycle; (S)-malate from fumarate: step 1/1. Its function is as follows. Involved in the TCA cycle. Catalyzes the stereospecific interconversion of fumarate to L-malate. This is Fumarate hydratase class II from Listeria monocytogenes serovar 1/2a (strain ATCC BAA-679 / EGD-e).